Here is a 93-residue protein sequence, read N- to C-terminus: Ribonuclease P protein component 1 (93 aa).

It belongs to the eukaryotic/archaeal RNase P protein component 1 family. As to quaternary structure, consists of a catalytic RNA component and at least 4-5 protein subunits.

The protein localises to the cytoplasm. The catalysed reaction is Endonucleolytic cleavage of RNA, removing 5'-extranucleotides from tRNA precursor.. Part of ribonuclease P, a protein complex that generates mature tRNA molecules by cleaving their 5'-ends. In Methanothermobacter thermautotrophicus (strain ATCC 29096 / DSM 1053 / JCM 10044 / NBRC 100330 / Delta H) (Methanobacterium thermoautotrophicum), this protein is Ribonuclease P protein component 1.